The primary structure comprises 603 residues: Flavin-dependent halogenase chlA (603 aa).

FAD is bound by residues Gly-16, Ala-19, and Glu-59. Thr-352 and Gly-353 together coordinate chloride.

The protein belongs to the flavin-dependent halogenase family.

The enzyme catalyses 2,4,6-trihydroxyphenylhexan-1-one + FADH2 + chloride + O2 = (3-chloro-2,4,6-trihydroxyphenyl)hexan-1-one + FAD + 2 H2O + H(+). It carries out the reaction (3-chloro-2,4,6-trihydroxyphenyl)hexan-1-one + FADH2 + chloride + O2 = (3,5-dichloro-2,4,6-trihydroxyphenyl)hexan-1-one + FAD + 2 H2O. Flavin-dependent halogenase; part of the gene cluster that mediates the biosynthesis of DIF-1 (Differentiation Inducing Factor-1), a signal molecule involved in the differentiation of pstO (prestalk-O) cells. The three-step process begins with the formation of (2,4,6-trihydroxyphenyl)-1-hexan-1-one (THPH) by the polyketide synthase StlB. THPH is then dichlorinated by the flavin-dependent halogenase ChlA. The last step of DIF-1 biosynthesis is the O-methylation of dichloro-THPH (or des-methyl-DIF-1) by the methyltransferase DmtA to yield DIF-1. This Dictyostelium discoideum (Social amoeba) protein is Flavin-dependent halogenase chlA.